The primary structure comprises 180 residues: MGDPKRQRKKYETPPHPWIKERLDRERVLMDKYELKNKKELWKHETQLKNFRRRARRLLAARGKQAEIEREQLLARLKRLGLLPEDAVLDDVLSLTIEDILERRLQTIVYKKGLARTMRQARQLIVHGHIEVNGQIIRSPSYLVLKEEEDTITYARTSPFANPQHPERMMIEKAKQGGEA.

One can recognise an S4 RNA-binding domain in the interval 103–174 (RRLQTIVYKK…HPERMMIEKA (72 aa)).

Belongs to the universal ribosomal protein uS4 family. In terms of assembly, part of the 30S ribosomal subunit. Contacts protein S5. The interaction surface between S4 and S5 is involved in control of translational fidelity.

Its function is as follows. One of the primary rRNA binding proteins, it binds directly to 16S rRNA where it nucleates assembly of the body of the 30S subunit. Functionally, with S5 and S12 plays an important role in translational accuracy. This Pyrococcus abyssi (strain GE5 / Orsay) protein is Small ribosomal subunit protein uS4.